The sequence spans 399 residues: Probable 2,3-bisphosphoglycerate-independent phosphoglycerate mutase (399 aa).

The protein belongs to the BPG-independent phosphoglycerate mutase family. A-PGAM subfamily.

The enzyme catalyses (2R)-2-phosphoglycerate = (2R)-3-phosphoglycerate. Its pathway is carbohydrate degradation; glycolysis; pyruvate from D-glyceraldehyde 3-phosphate: step 3/5. Functionally, catalyzes the interconversion of 2-phosphoglycerate and 3-phosphoglycerate. The sequence is that of Probable 2,3-bisphosphoglycerate-independent phosphoglycerate mutase from Geobacter sulfurreducens (strain ATCC 51573 / DSM 12127 / PCA).